A 91-amino-acid chain; its full sequence is C-C motif chemokine 5 (91 aa).

The first 23 residues, 1 to 23 (MKVSATAFAVLLMAAALCAPASA), serve as a signal peptide directing secretion. Disulfide bonds link Cys-33-Cys-57 and Cys-34-Cys-73.

It belongs to the intercrine beta (chemokine CC) family.

The protein resides in the secreted. Its function is as follows. Chemoattractant for blood monocytes, memory T-helper cells and eosinophils. Causes the release of histamine from basophils and activates eosinophils. May activate several chemokine receptors including CCR1, CCR3, CCR4 and CCR5. May also be an agonist of the G protein-coupled receptor GPR75. Together with GPR75, may play a role in neuron survival through activation of a downstream signaling pathway involving the PI3, Akt and MAP kinases. By activating GPR75 may also play a role in insulin secretion by islet cells. The polypeptide is C-C motif chemokine 5 (CCL5) (Bos taurus (Bovine)).